A 256-amino-acid polypeptide reads, in one-letter code: Ribonuclease HII (256 aa).

The region spanning 73-256 (KLIAGIDEAG…RVSFTKNFIV (184 aa)) is the RNase H type-2 domain. Residues Asp79, Glu80, and Asp171 each coordinate a divalent metal cation.

Belongs to the RNase HII family. The cofactor is Mn(2+). It depends on Mg(2+) as a cofactor.

Its subcellular location is the cytoplasm. The catalysed reaction is Endonucleolytic cleavage to 5'-phosphomonoester.. Its function is as follows. Endonuclease that specifically degrades the RNA of RNA-DNA hybrids. This Acetivibrio thermocellus (strain ATCC 27405 / DSM 1237 / JCM 9322 / NBRC 103400 / NCIMB 10682 / NRRL B-4536 / VPI 7372) (Clostridium thermocellum) protein is Ribonuclease HII.